A 1046-amino-acid chain; its full sequence is MSKLPLGKRLKIRSMVHMAAEPIPNFWPMRTFIHHNPLHGLEHLPFEQAVRQGEKLFHARGFLPREDYQRYHKEGRVDQNSIKRDIADFISKQETLNGLDLASLLSDLMCSVKNKVTRTRALADHDDVFQALHGKQLENAEALDLKALTQRLCAQFAPERPLYEAIDLLFGTQMGTTLDELVIKSCLDFFDEGQSTIQMPGRHQGLFAAWTALAKRNLRLFLRGMHIKQILDQDDTPEGIIAYILDELGIEEAHWDGLITRELTRLHGWAGFIRWRSSSKHYYWAEQYPGDLIDFLAIRLVLGLALIREHSRQKRTPMTVKVLQEYIEGHTAECYLRQAYYGGCILPAFAHDVDDALSHKKPQRINNILPGYLRQQRQFEATRQADALRDLASKAGQTDALMALNAPQIKQLMTLIEAFENEEGMIWLRAMESVYRREIINQIQLYAPHKKEKRPFAQALFCIDVRSEPIRRNLETVGEYQTYGIAGFFGVPVSYIGLGKGSEVNLCPVVITPKNLVLEVPVGATSIETDFYSSADHVLHEMKSSILSPYFTVEAAGLLFGFDMIGKTIAPRRYTQIRNHIEPKAQATRLLVDKLTREQADSIVRSLQRAMIVRAIHQEFGIEREAVTDAMIRELREAAMDNYHEQTEFARRFALSPTAETQFIAGLKKDYKINRSFVSMQMERLARIGFSLDEQVFYVDKALTSIGLTENFSRFVLLAGHGSTSDNNPYESALDCGACGGSHGLVSARVLAHMANKPEVRRRLAKQGIQIPEDTWFVSVMHNTTTDQLSLQDLDLLPNSHLVYLERLRNGLRAATRLSAAERLPALLDHPSPNIDTLSAQKQIERNASDWTQVRPEWGLARNASVVAGGRHLTEGANLSGRTFLQSYDYRLDPKGRHLENILSNPLIIGQWINLEHYFSAVDNEHFGSGSKAYHNVVGRFGVVTGNLSDLRTGLPAQSVLKDGRPYHEPIRLLAIIEAPAAFTLEVAGRLPKVMSLITNGWITVVVVDPETGDRLFYDRGEWYNLNNDPQYTPSVKPLLEEELSA.

Residues C462, D464, H721, and C736 each contribute to the Zn(2+) site.

The protein belongs to the inorganic carbon transporter (TC 9.A.2) DabA family. Forms a complex with DabB1. The cofactor is Zn(2+).

Its subcellular location is the cell inner membrane. In terms of biological role, part of an energy-coupled inorganic carbon pump. In Halothiobacillus neapolitanus (strain ATCC 23641 / c2) (Thiobacillus neapolitanus), this protein is Probable inorganic carbon transporter subunit DabA1.